A 476-amino-acid chain; its full sequence is MAQCVRRLVLAAPLAAVVALLLCTSSAPVARAAGTSDFTGAQQKNTLTVLQAFARAIPALGDTWTGSDFCSWEHIICYSSGVGVWMHNVDYTGTLPEMPASVDYKDVMILALDFGAMGQGLSGTLPPSWSSMKHLIVLDLEGTKVSGTLPPEWSEMTSAEALQLENCGLSGSLPTSWSSMPKLRIVSLSGNHFCGCVPDSWREKDRLDVTIEEWHMGEDCKLANACRPTAAPGTTTTNPPTTTGTPAASSTPSPGSGCEVDGCEVCEGDSAARCARCREGYSLTDEKTCLGEPRWRRGGGVERTAGCRCCVGGCAVERGAGGVRVRRAPLLCGAPGACPRPRHGVVAALSPPPADGETDSHTRTRTRRRASRVLSAVVAPARMHGHAEACMRVRVPALVCLSVWPAVGTRRRSNVRAAAVCRLGQRRCGARPSPCASVCVSWPRERRTECACPALFDGARLRCCALVVCAGAAPAG.

An N-terminal signal peptide occupies residues 1 to 32 (MAQCVRRLVLAAPLAAVVALLLCTSSAPVARA). A run of 4 repeats spans residues 107 to 130 (VMIL…PSWS), 131 to 154 (SMKH…PEWS), 155 to 178 (EMTS…TSWS), and 179 to 202 (SMPK…DSWR). The tract at residues 107–202 (VMILALDFGA…FCGCVPDSWR (96 aa)) is 4 X 24 AA tandem repeats. Disordered regions lie at residues 231–255 (APGT…PSPG) and 348–370 (ALSP…RRRA). Cys-452 carries the GPI-anchor amidated cysteine lipid modification. The propeptide at 453 to 476 (PALFDGARLRCCALVVCAGAAPAG) is removed in mature form.

It is found in the cell membrane. The sequence is that of Surface membrane glycoprotein GP46/M-2 from Leishmania amazonensis.